Here is a 317-residue protein sequence, read N- to C-terminus: tRNA dimethylallyltransferase (317 aa).

Glycine 14–threonine 21 is an ATP binding site. Residue threonine 16 to threonine 21 coordinates substrate. The interval aspartate 39 to glutamine 42 is interaction with substrate tRNA.

This sequence belongs to the IPP transferase family. As to quaternary structure, monomer. Requires Mg(2+) as cofactor.

The enzyme catalyses adenosine(37) in tRNA + dimethylallyl diphosphate = N(6)-dimethylallyladenosine(37) in tRNA + diphosphate. Functionally, catalyzes the transfer of a dimethylallyl group onto the adenine at position 37 in tRNAs that read codons beginning with uridine, leading to the formation of N6-(dimethylallyl)adenosine (i(6)A). The chain is tRNA dimethylallyltransferase from Bacillus thuringiensis subsp. konkukian (strain 97-27).